A 208-amino-acid polypeptide reads, in one-letter code: Inosine triphosphate pyrophosphatase (208 aa).

Ala-2 carries the N-acetylalanine modification. ITP is bound at residue 14–19 (TGNAKK). Glu-44 is a binding site for Mg(2+). Residues Lys-56, 72-73 (DT), Lys-89, 149-152 (FGWD), Lys-172, and 177-178 (HR) each bind ITP.

The protein belongs to the HAM1 NTPase family. Homodimer. Requires Mg(2+) as cofactor. The cofactor is Mn(2+).

Its subcellular location is the cytoplasm. It catalyses the reaction ITP + H2O = IMP + diphosphate + H(+). It carries out the reaction dITP + H2O = dIMP + diphosphate + H(+). The enzyme catalyses XTP + H2O = XMP + diphosphate + H(+). The catalysed reaction is N(6)-hydroxy-dATP + H2O = N(6)-hydroxy-dAMP + diphosphate + H(+). Its function is as follows. Pyrophosphatase that hydrolyzes the non-canonical purine nucleotides inosine triphosphate (ITP), deoxyinosine triphosphate (dITP) as well as 2'-deoxy-N-6-hydroxylaminopurine triphosphate (dHAPTP) and xanthosine 5'-triphosphate (XTP) to their respective monophosphate derivatives. The enzyme does not distinguish between the deoxy- and ribose forms. Probably excludes non-canonical purines from RNA and DNA precursor pools, thus preventing their incorporation into RNA and DNA and avoiding chromosomal lesions. The sequence is that of Inosine triphosphate pyrophosphatase from Bos taurus (Bovine).